Here is a 589-residue protein sequence, read N- to C-terminus: ATP-dependent lipid A-core flippase (589 aa).

5 consecutive transmembrane segments (helical) span residues 29-49, 70-90, 157-177, 261-281, and 283-303; these read LLLV…TGFL, WLPV…YITD, VIGA…TILV, MIGA…ALAG, and LTAG…PGLK. In terms of domain architecture, ABC transmembrane type-1 spans 32-314; that stretch reads VAALIAALIE…LTNVQNMVQR (283 aa). The 237-residue stretch at 346–582 folds into the ABC transporter domain; the sequence is IEFRDVTARY…GGLYSHLHGM (237 aa). 380–387 serves as a coordination point for ATP; that stretch reads GRSGSGKS.

Belongs to the ABC transporter superfamily. Lipid exporter (TC 3.A.1.106) family. As to quaternary structure, homodimer.

It localises to the cell inner membrane. It carries out the reaction ATP + H2O + lipid A-core oligosaccharideSide 1 = ADP + phosphate + lipid A-core oligosaccharideSide 2.. Its function is as follows. Involved in lipopolysaccharide (LPS) biosynthesis. Translocates lipid A-core from the inner to the outer leaflet of the inner membrane. Transmembrane domains (TMD) form a pore in the inner membrane and the ATP-binding domain (NBD) is responsible for energy generation. The protein is ATP-dependent lipid A-core flippase of Xanthomonas euvesicatoria pv. vesicatoria (strain 85-10) (Xanthomonas campestris pv. vesicatoria).